Here is a 382-residue protein sequence, read N- to C-terminus: Anhydro-N-acetylmuramic acid kinase (382 aa).

Position 9–16 (9–16) interacts with ATP; the sequence is GTSLDGID.

It belongs to the anhydro-N-acetylmuramic acid kinase family.

It carries out the reaction 1,6-anhydro-N-acetyl-beta-muramate + ATP + H2O = N-acetyl-D-muramate 6-phosphate + ADP + H(+). The protein operates within amino-sugar metabolism; 1,6-anhydro-N-acetylmuramate degradation. It participates in cell wall biogenesis; peptidoglycan recycling. In terms of biological role, catalyzes the specific phosphorylation of 1,6-anhydro-N-acetylmuramic acid (anhMurNAc) with the simultaneous cleavage of the 1,6-anhydro ring, generating MurNAc-6-P. Is required for the utilization of anhMurNAc either imported from the medium or derived from its own cell wall murein, and thus plays a role in cell wall recycling. This chain is Anhydro-N-acetylmuramic acid kinase, found in Bacillus anthracis (strain A0248).